The chain runs to 843 residues: Elongation factor 2 (843 aa).

Residues 17-344 form the tr-type G domain; the sequence is HNIRNMSVIA…MMIFHLPSPH (328 aa). Residues 26 to 33 and 158 to 161 each bind GTP; these read AHVDHGKS and NKMD. His-700 is modified (diphthamide). Residue Ser-837 is modified to Phosphoserine.

Belongs to the TRAFAC class translation factor GTPase superfamily. Classic translation factor GTPase family. As to quaternary structure, may interact with glutaredoxins (Grxs). As to expression, expressed in root, stem, leaves, flowers and siliques.

It is found in the cytoplasm. It carries out the reaction GTP + H2O = GDP + phosphate + H(+). Its pathway is protein biosynthesis; polypeptide chain elongation. In terms of biological role, catalyzes the GTP-dependent ribosomal translocation step during translation elongation. During this step, the ribosome changes from the pre-translocational (PRE) to the post-translocational (POST) state as the newly formed A-site-bound peptidyl-tRNA and P-site-bound deacylated tRNA move to the P and E sites, respectively. Catalyzes the coordinated movement of the two tRNA molecules, the mRNA and conformational changes in the ribosome. Involved in cold responses leading to freezing tolerance via the induction of cold-responsive genes. In Arabidopsis thaliana (Mouse-ear cress), this protein is Elongation factor 2.